The following is a 468-amino-acid chain: Abscisic acid 8'-hydroxylase 4 (468 aa).

Residues 4–24 (IWFLVVPILILCLLLVRVIVS) form a helical membrane-spanning segment. Cys415 contacts heme.

Belongs to the cytochrome P450 family. Heme is required as a cofactor. In terms of tissue distribution, mainly expressed in flowers. Lower expression in siliques, rosette leaves, roots and stems. Not expressed in dry seeds. Expressed in silique envelopes, but not in embryo or endosperm during the seed development.

The protein localises to the membrane. The enzyme catalyses 2-cis-(+)-abscisate + reduced [NADPH--hemoprotein reductase] + O2 = (+)-8'-hydroxyabscisate + oxidized [NADPH--hemoprotein reductase] + H2O + H(+). Its pathway is plant hormone degradation; abscisic acid degradation. Involved in the oxidative degradation of abscisic acid, but not in the isomerization of the produced 8'-hydroxyabscisic acid (8'-OH-ABA) to (-)-phaseic acid (PA). In Arabidopsis thaliana (Mouse-ear cress), this protein is Abscisic acid 8'-hydroxylase 4 (CYP707A4).